Reading from the N-terminus, the 379-residue chain is 1-deoxy-D-xylulose 5-phosphate reductoisomerase (379 aa).

Residues T10, G11, S12, I13, N39, and N121 each coordinate NADPH. 1-deoxy-D-xylulose 5-phosphate is bound at residue K122. E123 is an NADPH binding site. D147 serves as a coordination point for Mn(2+). 1-deoxy-D-xylulose 5-phosphate is bound by residues S148, E149, S173, and H196. Mn(2+) is bound at residue E149. G202 provides a ligand contact to NADPH. The 1-deoxy-D-xylulose 5-phosphate site is built by S209, N214, K215, and E218. E218 lines the Mn(2+) pocket.

Belongs to the DXR family. The cofactor is Mg(2+). Mn(2+) serves as cofactor.

It catalyses the reaction 2-C-methyl-D-erythritol 4-phosphate + NADP(+) = 1-deoxy-D-xylulose 5-phosphate + NADPH + H(+). Its pathway is isoprenoid biosynthesis; isopentenyl diphosphate biosynthesis via DXP pathway; isopentenyl diphosphate from 1-deoxy-D-xylulose 5-phosphate: step 1/6. Catalyzes the NADPH-dependent rearrangement and reduction of 1-deoxy-D-xylulose-5-phosphate (DXP) to 2-C-methyl-D-erythritol 4-phosphate (MEP). This chain is 1-deoxy-D-xylulose 5-phosphate reductoisomerase, found in Chlamydia caviae (strain ATCC VR-813 / DSM 19441 / 03DC25 / GPIC) (Chlamydophila caviae).